A 310-amino-acid polypeptide reads, in one-letter code: Thioredoxin reductase (310 aa).

Asn-34–Gln-41 provides a ligand contact to FAD. Cys-135 and Cys-138 are oxidised to a cystine. Asp-281–Ala-290 contributes to the FAD binding site.

Belongs to the class-II pyridine nucleotide-disulfide oxidoreductase family. In terms of assembly, homodimer. It depends on FAD as a cofactor.

The protein resides in the cytoplasm. The enzyme catalyses [thioredoxin]-dithiol + NADP(+) = [thioredoxin]-disulfide + NADPH + H(+). The chain is Thioredoxin reductase (trxB) from Rickettsia prowazekii (strain Madrid E).